We begin with the raw amino-acid sequence, 675 residues long: DNA ligase (675 aa).

NAD(+) contacts are provided by residues 34–38, 83–84, and E116; these read DAEYD and SL. The N6-AMP-lysine intermediate role is filled by K118. 4 residues coordinate NAD(+): R139, E176, K293, and K317. Residues C411, C414, C429, and C435 each contribute to the Zn(2+) site. In terms of domain architecture, BRCT spans 594–675; the sequence is AGENPFKGKT…FLAIVNAYKR (82 aa).

The protein belongs to the NAD-dependent DNA ligase family. LigA subfamily. Requires Mg(2+) as cofactor. Mn(2+) serves as cofactor.

It catalyses the reaction NAD(+) + (deoxyribonucleotide)n-3'-hydroxyl + 5'-phospho-(deoxyribonucleotide)m = (deoxyribonucleotide)n+m + AMP + beta-nicotinamide D-nucleotide.. Functionally, DNA ligase that catalyzes the formation of phosphodiester linkages between 5'-phosphoryl and 3'-hydroxyl groups in double-stranded DNA using NAD as a coenzyme and as the energy source for the reaction. It is essential for DNA replication and repair of damaged DNA. The chain is DNA ligase from Mannheimia succiniciproducens (strain KCTC 0769BP / MBEL55E).